We begin with the raw amino-acid sequence, 362 residues long: 3-dehydroquinate synthase (362 aa).

NAD(+)-binding positions include 71–76 (DGEQYK), 105–109 (GVIGD), 129–130 (TT), Lys142, and Lys151. Glu184, His247, and His264 together coordinate Zn(2+).

This sequence belongs to the sugar phosphate cyclases superfamily. Dehydroquinate synthase family. Requires NAD(+) as cofactor. Co(2+) serves as cofactor. The cofactor is Zn(2+).

The protein localises to the cytoplasm. It catalyses the reaction 7-phospho-2-dehydro-3-deoxy-D-arabino-heptonate = 3-dehydroquinate + phosphate. Its pathway is metabolic intermediate biosynthesis; chorismate biosynthesis; chorismate from D-erythrose 4-phosphate and phosphoenolpyruvate: step 2/7. In terms of biological role, catalyzes the conversion of 3-deoxy-D-arabino-heptulosonate 7-phosphate (DAHP) to dehydroquinate (DHQ). The protein is 3-dehydroquinate synthase of Haemophilus ducreyi (strain 35000HP / ATCC 700724).